A 621-amino-acid chain; its full sequence is (-)-beta-phellandrene synthase 1, chloroplastic (621 aa).

Residues M1 to R49 constitute a chloroplast transit peptide. Positions 372, 376, and 524 each coordinate Mg(2+). A DDXXD motif motif is present at residues D372–D376.

This sequence belongs to the terpene synthase family. Tpsd subfamily. Mg(2+) serves as cofactor. Mn(2+) is required as a cofactor.

It is found in the plastid. It localises to the chloroplast. It catalyses the reaction (2E)-geranyl diphosphate = (-)-beta-phellandrene + diphosphate. It functions in the pathway terpene metabolism; oleoresin biosynthesis. It participates in secondary metabolite biosynthesis; terpenoid biosynthesis. Its function is as follows. Monoterpene synthase (TPS) involved in the biosynthesis of monoterpene natural products included in conifer oleoresin secretions and volatile emissions; these compounds contribute to biotic and abiotic stress defense against herbivores and pathogens. Catalyzes the conversion of (2E)-geranyl diphosphate (GPP) to (-)-beta-phellandrene and, to a lower extent, to (-)-alpha-phellandrene. The sequence is that of (-)-beta-phellandrene synthase 1, chloroplastic from Pinus contorta (Shore pine).